The sequence spans 634 residues: MAEEQEFTQLCKLPAQPSHPHCVNNTYRSAQHSQALLRGLLALRDSGILFDVVLVVEGRHIEAHRILLAASCDYFRGMFAGGLKEMEQEEVLIHGVSYNAMCQILHFIYTSELELSLSNVQETLVAACQLQIPEIIHFCCDFLMSWVDEENILDVYRLAELFDLSRLTEQLDTYILKNFVAFSRTDKYRQLPLEKVYSLLSSNRLEVSCETEVYEGALLYHYSLEQVQADQISLHEPPKLLETVRFPLMEAEVLQRLHDKLDPSPLRDTVASALMYHRNESLQPSLQSPQTELRSDFQCVVGFGGIHSTPSTVLSDQAKYLNPLLGEWKHFTASLAPRMSNQGIAVLNNFVYLIGGDNNVQGFRAESRCWRYDPRHNRWFQIQSLQQEHADLSVCVVGRYIYAVAGRDYHNDLNAVERYDPATNSWAYVAPLKREVYAHAGATLEGKMYITCGRRGEDYLKETHCYDPGSNTWHTLADGPVRRAWHGMATLLNKLYVIGGSNNDAGYRRDVHQVACYSCTSGQWSSVCPLPAGHGEPGIAVLDNRIYVLGGRSHNRGSRTGYVHIYDVEKDCWEEGPQLDNSISGLAACVLTLPRSLLLEPPRGTPDRSQADPDFASEVMSVSDWEEFDNSSED.

The residue at position 2 (alanine 2) is an N-acetylalanine. The BTB domain maps to 50-117; the sequence is FDVVLVVEGR…IYTSELELSL (68 aa). 6 Kelch repeats span residues 299–349, 350–399, 400–446, 448–493, 494–544, and 545–593; these read CVVG…VLNN, FVYL…VVGR, YIYA…TLEG, MYIT…TLLN, KLYV…VLDN, and RIYV…VLTL. Phosphothreonine is present on threonine 463. Phosphotyrosine is present on tyrosine 466. A Phosphothreonine modification is found at threonine 475. Positions 600-634 are disordered; the sequence is EPPRGTPDRSQADPDFASEVMSVSDWEEFDNSSED. Residue threonine 605 is modified to Phosphothreonine. Positions 624 to 634 are enriched in acidic residues; that stretch reads DWEEFDNSSED.

As to quaternary structure, component of the BCR(KLHL22) E3 ubiquitin ligase complex, at least composed of CUL3, KLHL22 and RBX1. Interacts with PLK1. Interacts with DEPDC5 (via DEP domain); the interaction depends on amino acid availability. Interacts with YWHAE; required for the nuclear localization of KLHL22 upon amino acid starvation.

It is found in the cytoplasm. The protein resides in the cytosol. The protein localises to the cytoskeleton. It localises to the microtubule organizing center. Its subcellular location is the centrosome. It is found in the spindle. The protein resides in the nucleus. The protein localises to the lysosome. It functions in the pathway protein modification; protein ubiquitination. Substrate-specific adapter of a BCR (BTB-CUL3-RBX1) E3 ubiquitin ligase complex required for chromosome alignment and localization of PLK1 at kinetochores. The BCR(KLHL22) ubiquitin ligase complex mediates monoubiquitination of PLK1, leading to PLK1 dissociation from phosphoreceptor proteins and subsequent removal from kinetochores, allowing silencing of the spindle assembly checkpoint (SAC) and chromosome segregation. Monoubiquitination of PLK1 does not lead to PLK1 degradation. The BCR(KLHL22) ubiquitin ligase complex is also responsible for the amino acid-stimulated 'Lys-48' polyubiquitination and proteasomal degradation of DEPDC5. Through the degradation of DEPDC5, releases the GATOR1 complex-mediated inhibition of the TORC1 pathway. It is therefore an amino acid-dependent activator within the amino acid-sensing branch of the TORC1 pathway, indirectly regulating different cellular processes including cell growth and autophagy. The protein is Kelch-like protein 22 of Homo sapiens (Human).